Here is a 709-residue protein sequence, read N- to C-terminus: Protein white (709 aa).

The disordered stretch occupies residues 1-35; sequence MTINTDDQYADGESKTTISSNRRYSTSSFQDQSME. The segment covering 15–32 has biased composition (polar residues); it reads KTTISSNRRYSTSSFQDQ. The region spanning 103–348 is the ABC transporter domain; the sequence is FTRQRLVKDF…SQLGIPCPPN (246 aa). Residues 136 to 143 and 292 to 299 contribute to the ATP site; these read GSSGAGKT and GMAMKGKT. The chain crosses the membrane as a helical span at residues 457–475; that stretch reads LLQTAMVASLIGSIYFGQV. Asn485 carries an N-linked (GlcNAc...) asparagine glycan. A run of 4 helical transmembrane segments spans residues 487–507, 537–555, 564–585, and 598–616; these read SLFLFLTNMTFQNVFAVINVF, LPLFIAVPFVFTSITYPMI, YLTTLFIVTLVANVSTSFGYLI, and VGPPVVIPFLIFGGFFLNS. An N-linked (GlcNAc...) asparagine glycan is attached at Asn658. A helical membrane pass occupies residues 681 to 700; the sequence is LDIGCLFALIVLFRLGALFC.

It belongs to the ABC transporter superfamily. ABCG family. Eye pigment precursor importer (TC 3.A.1.204) subfamily.

The protein resides in the membrane. Its function is as follows. May be part of a membrane-spanning permease system necessary for the transport of pigment precursors into pigment cells responsible for eye color. The chain is Protein white (W) from Anopheles albimanus (New world malaria mosquito).